The sequence spans 184 residues: MDISAGIQASLAGRYASALFELAAEEGVVTAVESDLDKLHAALGESDDLKAVTNNPEISRKDQASAIEGVAGVLGLSPLTTKFLGTLAANRRLSKLGDMIRAFRTIAAAQRGEVTADVVSAHPLKDDQLESLKTKLTAREGRTVKLSPTVDPDLLGGLVVTIGSKRIDGSIRTRLNTLANAMKG.

The protein belongs to the ATPase delta chain family. As to quaternary structure, F-type ATPases have 2 components, F(1) - the catalytic core - and F(0) - the membrane proton channel. F(1) has five subunits: alpha(3), beta(3), gamma(1), delta(1), epsilon(1). CF(0) has four main subunits: a(1), b(1), b'(1) and c(10-14). The alpha and beta chains form an alternating ring which encloses part of the gamma chain. F(1) is attached to F(0) by a central stalk formed by the gamma and epsilon chains, while a peripheral stalk is formed by the delta, b and b' chains.

It localises to the cell inner membrane. Functionally, f(1)F(0) ATP synthase produces ATP from ADP in the presence of a proton or sodium gradient. F-type ATPases consist of two structural domains, F(1) containing the extramembraneous catalytic core and F(0) containing the membrane proton channel, linked together by a central stalk and a peripheral stalk. During catalysis, ATP synthesis in the catalytic domain of F(1) is coupled via a rotary mechanism of the central stalk subunits to proton translocation. In terms of biological role, this protein is part of the stalk that links CF(0) to CF(1). It either transmits conformational changes from CF(0) to CF(1) or is implicated in proton conduction. In Erythrobacter litoralis (strain HTCC2594), this protein is ATP synthase subunit delta.